The following is a 147-amino-acid chain: uncharacterized protein (147 aa).

A helical membrane pass occupies residues 13 to 35; it reads NSRINLLGILVLNVVCGKSSIFF.

The protein localises to the membrane. This is an uncharacterized protein from Saccharomyces cerevisiae (strain ATCC 204508 / S288c) (Baker's yeast).